Here is a 325-residue protein sequence, read N- to C-terminus: Melanocortin receptor 5 (325 aa).

Residues 1 to 37 (MNSSSHLTLLDLTLNASEDNILGQNVNNKSSACEDMG) lie on the Extracellular side of the membrane. Residues Asn2, Asn15, and Asn28 are each glycosylated (N-linked (GlcNAc...) asparagine). Residues 38-61 (IAVEVFLTLGLVSLLENILVIGAI) form a helical membrane-spanning segment. Residues 62-73 (VKNKNLHSPMYF) are Cytoplasmic-facing. A helical transmembrane segment spans residues 74–97 (FVGSLAVADMLVSMSNAWETITIY). The Extracellular portion of the chain corresponds to 98 to 114 (LINNKHVVIADTFVRHI). Residues 115–138 (DNVFDSMICISVVASMCSLLAIAV) traverse the membrane as a helical segment. Over 139 to 155 (DRYITIFYALRYHHIMT) the chain is Cytoplasmic. Residues 156–179 (ARRSGVIIACIWTFCISCGIVFII) traverse the membrane as a helical segment. Over 180 to 186 (YYESKYV) the chain is Extracellular. A helical membrane pass occupies residues 187–211 (IVCLISMFFTMLFFMVSLYIHMFLL). At 212 to 239 (ARNHVKRIAASPRYNSVRQRASMKGAIT) the chain is on the cytoplasmic side. The chain crosses the membrane as a helical span at residues 240–265 (LTMLLGIFIVCWSPFFLHLILMISCP). Over 266-273 (QNVYCACF) the chain is Extracellular. The chain crosses the membrane as a helical span at residues 274-297 (MSYFNMYLILIMCNSVIDPLIYAL). The Cytoplasmic segment spans residues 298–325 (RSQEMRRTFKEIICCHGFRRTCTLLGRY). S-palmitoyl cysteine attachment occurs at residues Cys311 and Cys312.

Belongs to the G-protein coupled receptor 1 family. Very low expression levels is detected in brain, while high levels are found in adrenals, stomach, lung and spleen.

The protein localises to the cell membrane. Its function is as follows. Receptor for MSH (alpha, beta and gamma) and ACTH. The activity of this receptor is mediated by G proteins which activate adenylate cyclase. This receptor is a possible mediator of the immunomodulation properties of melanocortins. The chain is Melanocortin receptor 5 (Mc5r) from Rattus norvegicus (Rat).